The following is a 346-amino-acid chain: Glycerol-3-phosphate dehydrogenase [NAD(P)+] (346 aa).

Residues Ser15, Trp16, Arg36, and Lys110 each coordinate NADPH. Sn-glycerol 3-phosphate contacts are provided by Lys110, Gly139, and Ser141. NADPH is bound at residue Ala143. Sn-glycerol 3-phosphate-binding residues include Lys194, Asp247, Ser257, Arg258, and Asn259. Lys194 (proton acceptor) is an active-site residue. Arg258 contributes to the NADPH binding site. NADPH contacts are provided by Val282 and Glu284.

It belongs to the NAD-dependent glycerol-3-phosphate dehydrogenase family.

It localises to the cytoplasm. The enzyme catalyses sn-glycerol 3-phosphate + NAD(+) = dihydroxyacetone phosphate + NADH + H(+). It catalyses the reaction sn-glycerol 3-phosphate + NADP(+) = dihydroxyacetone phosphate + NADPH + H(+). It participates in membrane lipid metabolism; glycerophospholipid metabolism. In terms of biological role, catalyzes the reduction of the glycolytic intermediate dihydroxyacetone phosphate (DHAP) to sn-glycerol 3-phosphate (G3P), the key precursor for phospholipid synthesis. The sequence is that of Glycerol-3-phosphate dehydrogenase [NAD(P)+] from Xylella fastidiosa (strain Temecula1 / ATCC 700964).